The sequence spans 227 residues: E3 ubiquitin-protein ligase ZNRF1 (227 aa).

The tract at residues 1–38 (MGGKQSTAARSRGPFPGVSTDDSAVPPPGGAPHFGHYR) is disordered. The N-myristoyl glycine moiety is linked to residue Gly-2. A required for endosomal and lysosomal localization and myristoylation region spans residues 2-10 (GGKQSTAAR). Phosphoserine occurs at positions 50, 52, and 53. Residues 77 to 105 (RGAGDAERAPGSGGSASDSTYAHGNGYQE) form a disordered region. The residue at position 103 (Tyr-103) is a Phosphotyrosine. Ser-123 is subject to Phosphoserine. The segment at 184–225 (CVICLEELLQGDTIARLPCLCIYHKSCIDSWFEVNRSCPEHP) adopts an RING-type; atypical zinc-finger fold.

In terms of assembly, interacts with AKT1, GLUL and TUBB2A. Interacts with ZNRF2. Interacts (via its RING domain) with UBE2N. Interacts (when phosphorylated) with YWHAE. N-myristoylation targets ZNRF1 to intracellular membranes. In terms of processing, phosphorylated by SRC at Tyr-103; leading to 'Lys-63'-linked ubiquitination of TLR3, lysosomal trafficking and degradation.

It localises to the endosome. The protein resides in the lysosome. The protein localises to the membrane. Its subcellular location is the cytoplasmic vesicle. It is found in the secretory vesicle. It localises to the synaptic vesicle membrane. It carries out the reaction S-ubiquitinyl-[E2 ubiquitin-conjugating enzyme]-L-cysteine + [acceptor protein]-L-lysine = [E2 ubiquitin-conjugating enzyme]-L-cysteine + N(6)-ubiquitinyl-[acceptor protein]-L-lysine.. Its pathway is protein modification; protein ubiquitination. Its function is as follows. E3 ubiquitin-protein ligase that plays a role in different processes including cell differentiation, receptor recycling or regulation of inflammation. Mediates the ubiquitination of AKT1 and GLUL, thereby playing a role in neuron cells differentiation. Plays a role in the establishment and maintenance of neuronal transmission and plasticity. Regulates Schwann cells differentiation by mediating ubiquitination of GLUL. Promotes neurodegeneration by mediating 'Lys-48'-linked polyubiquitination and subsequent degradation of AKT1 in axons: degradation of AKT1 prevents AKT1-mediated phosphorylation of GSK3B, leading to GSK3B activation and phosphorylation of DPYSL2/CRMP2 followed by destabilization of microtubule assembly in axons. Ubiquitinates the Na(+)/K(+) ATPase alpha-1 subunit/ATP1A1 and thereby influences its endocytosis and/or degradation. Controls ligand-induced EGFR signaling via mediating receptor ubiquitination and recruitment of the ESCRT machinery. Acts as a negative feedback mechanism controlling TLR3 trafficking by mediating TLR3 'Lys-63'-linked polyubiquitination to reduce type I IFN production. Modulates inflammation by promoting caveolin-1/CAV1 ubiquitination and degradation to regulate TLR4-activated immune response. This chain is E3 ubiquitin-protein ligase ZNRF1 (ZNRF1), found in Bos taurus (Bovine).